We begin with the raw amino-acid sequence, 1193 residues long: DNA-directed RNA polymerase subunit beta (1193 aa).

Residues 1153-1162 (EMRDLEDDED) show a composition bias toward acidic residues. Residues 1153–1193 (EMRDLEDDEDAKQNEGLSLPNDEESEELVSADAERDVVTKE) are disordered. Residues 1184 to 1193 (DAERDVVTKE) are compositionally biased toward basic and acidic residues.

It belongs to the RNA polymerase beta chain family. The RNAP catalytic core consists of 2 alpha, 1 beta, 1 beta' and 1 omega subunit. When a sigma factor is associated with the core the holoenzyme is formed, which can initiate transcription.

It carries out the reaction RNA(n) + a ribonucleoside 5'-triphosphate = RNA(n+1) + diphosphate. DNA-dependent RNA polymerase catalyzes the transcription of DNA into RNA using the four ribonucleoside triphosphates as substrates. The sequence is that of DNA-directed RNA polymerase subunit beta from Bacillus licheniformis (strain ATCC 14580 / DSM 13 / JCM 2505 / CCUG 7422 / NBRC 12200 / NCIMB 9375 / NCTC 10341 / NRRL NRS-1264 / Gibson 46).